We begin with the raw amino-acid sequence, 328 residues long: Phosphoserine phosphatase (328 aa).

Residue D113 is the Nucleophile of the active site. The Mg(2+) site is built by D113 and D115. D115 (proton donor) is an active-site residue. Residues E122, R158, 201-202 (SG), and K246 contribute to the substrate site. D269 contributes to the Mg(2+) binding site. Residue N272 coordinates substrate.

Belongs to the HAD-like hydrolase superfamily. SerB family. Mg(2+) is required as a cofactor.

The enzyme catalyses O-phospho-L-serine + H2O = L-serine + phosphate. It catalyses the reaction O-phospho-D-serine + H2O = D-serine + phosphate. It functions in the pathway amino-acid biosynthesis; L-serine biosynthesis; L-serine from 3-phospho-D-glycerate: step 3/3. In Vibrio cholerae serotype O1 (strain ATCC 39315 / El Tor Inaba N16961), this protein is Phosphoserine phosphatase.